A 144-amino-acid polypeptide reads, in one-letter code: Large ribosomal subunit protein uL11 (144 aa).

Belongs to the universal ribosomal protein uL11 family. In terms of assembly, part of the ribosomal stalk of the 50S ribosomal subunit. Interacts with L10 and the large rRNA to form the base of the stalk. L10 forms an elongated spine to which L12 dimers bind in a sequential fashion forming a multimeric L10(L12)X complex. Post-translationally, one or more lysine residues are methylated.

Its function is as follows. Forms part of the ribosomal stalk which helps the ribosome interact with GTP-bound translation factors. The chain is Large ribosomal subunit protein uL11 from Gluconobacter oxydans (strain 621H) (Gluconobacter suboxydans).